Consider the following 357-residue polypeptide: Methylthioribose-1-phosphate isomerase (357 aa).

Residues 49-51, Arg-89, and Gln-197 contribute to the substrate site; that span reads RGA. Asp-238 serves as the catalytic Proton donor. Substrate is bound at residue 248 to 249; it reads NK.

This sequence belongs to the eIF-2B alpha/beta/delta subunits family. MtnA subfamily.

The catalysed reaction is 5-(methylsulfanyl)-alpha-D-ribose 1-phosphate = 5-(methylsulfanyl)-D-ribulose 1-phosphate. It functions in the pathway amino-acid biosynthesis; L-methionine biosynthesis via salvage pathway; L-methionine from S-methyl-5-thio-alpha-D-ribose 1-phosphate: step 1/6. Its function is as follows. Catalyzes the interconversion of methylthioribose-1-phosphate (MTR-1-P) into methylthioribulose-1-phosphate (MTRu-1-P). This Leptospira biflexa serovar Patoc (strain Patoc 1 / Ames) protein is Methylthioribose-1-phosphate isomerase.